The chain runs to 571 residues: Zinc finger protein 181 (571 aa).

A KRAB domain is found at 4 to 76 (VTFNDVAIDF…EKKLSKGMIP (73 aa)). Glycyl lysine isopeptide (Lys-Gly) (interchain with G-Cter in SUMO2) cross-links involve residues Lys-109 and Lys-126. 11 consecutive C2H2-type zinc fingers follow at residues 237-259 (YTCSECGKAFGKQSILNRHWRIH), 265-287 (YECRECGKTFSHGSSLTRHLISH), 293-315 (YKCIECGKAFSHVSSLTNHQSTH), 321-343 (YECMNCGKSFSRVSHLIEHLRIH), 349-371 (YECRICGKAFIHRSSLIHHQKIH), 377-399 (YECRECGKAFCCSSHLTRHQRIH), 405-427 (YECNKCLKVFSSLSFLVQHQSIH), 433-455 (FECQKCRKSFNQLESLNMHLRNH), 461-483 (YECSICGKAFSHRSSLLQHHRIH), 489-511 (YECIKCGKTFSCSSNLTVHQRIH), and 517-539 (YKCNECGKAFSKGSNLTAHQRVH).

It belongs to the krueppel C2H2-type zinc-finger protein family.

It localises to the nucleus. In terms of biological role, may be involved in transcriptional regulation. The sequence is that of Zinc finger protein 181 (ZNF181) from Homo sapiens (Human).